Reading from the N-terminus, the 213-residue chain is Thiamine-phosphate synthase (213 aa).

Residues 40-44 and N75 contribute to the 4-amino-2-methyl-5-(diphosphooxymethyl)pyrimidine site; that span reads QFREK. Positions 76 and 95 each coordinate Mg(2+). S113 is a 4-amino-2-methyl-5-(diphosphooxymethyl)pyrimidine binding site. 139 to 141 provides a ligand contact to 2-[(2R,5Z)-2-carboxy-4-methylthiazol-5(2H)-ylidene]ethyl phosphate; it reads TPS. Position 142 (K142) interacts with 4-amino-2-methyl-5-(diphosphooxymethyl)pyrimidine. 2-[(2R,5Z)-2-carboxy-4-methylthiazol-5(2H)-ylidene]ethyl phosphate-binding positions include G171 and 191–192; that span reads IS.

This sequence belongs to the thiamine-phosphate synthase family. The cofactor is Mg(2+).

It catalyses the reaction 2-[(2R,5Z)-2-carboxy-4-methylthiazol-5(2H)-ylidene]ethyl phosphate + 4-amino-2-methyl-5-(diphosphooxymethyl)pyrimidine + 2 H(+) = thiamine phosphate + CO2 + diphosphate. It carries out the reaction 2-(2-carboxy-4-methylthiazol-5-yl)ethyl phosphate + 4-amino-2-methyl-5-(diphosphooxymethyl)pyrimidine + 2 H(+) = thiamine phosphate + CO2 + diphosphate. The enzyme catalyses 4-methyl-5-(2-phosphooxyethyl)-thiazole + 4-amino-2-methyl-5-(diphosphooxymethyl)pyrimidine + H(+) = thiamine phosphate + diphosphate. It participates in cofactor biosynthesis; thiamine diphosphate biosynthesis; thiamine phosphate from 4-amino-2-methyl-5-diphosphomethylpyrimidine and 4-methyl-5-(2-phosphoethyl)-thiazole: step 1/1. In terms of biological role, condenses 4-methyl-5-(beta-hydroxyethyl)thiazole monophosphate (THZ-P) and 2-methyl-4-amino-5-hydroxymethyl pyrimidine pyrophosphate (HMP-PP) to form thiamine monophosphate (TMP). This chain is Thiamine-phosphate synthase, found in Staphylococcus aureus (strain MSSA476).